An 807-amino-acid chain; its full sequence is Spondin-1 (807 aa).

Positions 1–28 (MRLSPAPLRLSRGPALLALALPLAAALA) are cleaved as a signal peptide. In terms of domain architecture, Reelin spans 29 to 194 (FSDETLDKVA…DPTLDGVTDR (166 aa)). Cystine bridges form between C44/C128, C156/C182, C199/C336, C200/C340, C202/C415, C443/C480, C454/C489, C459/C494, C502/C538, C513/C517, C548/C554, C559/C595, C570/C574, C605/C610, C615/C650, C626/C630, and C660/C665. In terms of domain architecture, Spondin spans 195-388 (PILDCCACGT…LTSLDHPQSP (194 aa)). A glycan (N-linked (GlcNAc...) asparagine) is linked at N214. Residues D325, D354, and D358 each coordinate Ca(2+). TSP type-1 domains lie at 442-495 (TCIY…PGCS), 501-555 (TCTM…EECS), 558-611 (SCLV…PECH), 614-666 (PCLL…PECP), and 668-721 (DCEL…RKCL). The N-linked (GlcNAc...) asparagine glycan is linked to N681. Residues 732-746 (REARESRRSEQLREE) are compositionally biased toward basic and acidic residues. Residues 732-752 (REARESRRSEQLREESDGEQF) are disordered. In terms of domain architecture, TSP type-1 6 spans 754-806 (GCRMRPWTAWSECTKLCGGGIQERYMTVKKRFKSSQFTSCKDKKEIRACNVHP).

Binds to the central extracellular domain of APP and inhibits beta-secretase cleavage of APP. As to expression, expressed at high levels in the floor plate.

Its subcellular location is the secreted. It localises to the extracellular space. The protein resides in the extracellular matrix. Functionally, cell adhesion protein that promotes the attachment of spinal cord and sensory neuron cells and the outgrowth of neurites in vitro. May contribute to the growth and guidance of axons in both the spinal cord and the PNS. The sequence is that of Spondin-1 (Spon1) from Rattus norvegicus (Rat).